The following is a 167-amino-acid chain: Glutathione peroxidase-like peroxiredoxin 1 (167 aa).

Cys36 functions as the Cysteine sulfenic acid (-SOH) intermediate in the catalytic mechanism. Cysteines 36 and 82 form a disulfide.

Belongs to the glutathione peroxidase family. In terms of assembly, monomer.

It localises to the peroxisome matrix. The protein localises to the mitochondrion outer membrane. The enzyme catalyses 2 glutathione + H2O2 = glutathione disulfide + 2 H2O. The catalysed reaction is a hydroperoxide + [thioredoxin]-dithiol = an alcohol + [thioredoxin]-disulfide + H2O. Glutathione peroxidase-like protein that protects cells from phospholipid hydroperoxides and nonphospholipid peroxides during oxidative stress. Has peroxidase activity using thioredoxin or glutathione as a reducing power. Involved in peroxisome formation. The polypeptide is Glutathione peroxidase-like peroxiredoxin 1 (Saccharomyces cerevisiae (strain ATCC 204508 / S288c) (Baker's yeast)).